The following is a 710-amino-acid chain: Dual specificity protein kinase shkE (710 aa).

Low complexity-rich tracts occupy residues 83–94 (DVSDSNNNNSTS), 107–129 (NNNNNNNNNNNNNNNNNNNNNNN), and 197–208 (QKQQQSQASIQQ). Disordered stretches follow at residues 83–136 (DVSD…PTVI) and 189–232 (QHLT…IPPE). One can recognise a Protein kinase domain in the interval 237 to 495 (DVKTDLLGGG…EVTQRMNEVL (259 aa)). Residues 243–251 (LGGGAYGKV) and Lys264 each bind ATP. The active-site Proton acceptor is Asp359. The region spanning 597-707 (WFHFDISRDI…CPITEIKVPY (111 aa)) is the SH2 domain.

It belongs to the protein kinase superfamily. Ser/Thr protein kinase family. SH2 domain-containing protein kinase subfamily.

Its subcellular location is the membrane. It carries out the reaction L-seryl-[protein] + ATP = O-phospho-L-seryl-[protein] + ADP + H(+). The catalysed reaction is L-threonyl-[protein] + ATP = O-phospho-L-threonyl-[protein] + ADP + H(+). Its function is as follows. Required for proper chemotaxis and phagocytosis; proper spatiotemporal control of F-actin levels in chemotaxing cells. Negative regulator of the PI3K (phosphatidylinositol 3 kinase) pathway. Predominantly phosphorylates serines and threonines and tyrosines at a lower level. In Dictyostelium discoideum (Social amoeba), this protein is Dual specificity protein kinase shkE (shkE).